Reading from the N-terminus, the 167-residue chain is Urease accessory protein UreE (167 aa).

The disordered stretch occupies residues 137–158 (EAGAYQSAPHGHSHSHAHGHDH).

The protein belongs to the UreE family.

It is found in the cytoplasm. Its function is as follows. Involved in urease metallocenter assembly. Binds nickel. Probably functions as a nickel donor during metallocenter assembly. This Pseudomonas putida (strain ATCC 700007 / DSM 6899 / JCM 31910 / BCRC 17059 / LMG 24140 / F1) protein is Urease accessory protein UreE.